The sequence spans 152 residues: Transcription elongation factor Spt5 (152 aa).

The 30-residue stretch at 99 to 128 (PGDVVEVISGPFRGTQAQVIRVEEAKGEVV) folds into the KOW domain.

The protein belongs to the archaeal Spt5 family. As to quaternary structure, heterodimer composed of Spt4 and Spt5. Interacts with RNA polymerase (RNAP).

In terms of biological role, stimulates transcription elongation. The polypeptide is Transcription elongation factor Spt5 (Saccharolobus solfataricus (strain ATCC 35092 / DSM 1617 / JCM 11322 / P2) (Sulfolobus solfataricus)).